Reading from the N-terminus, the 381-residue chain is Alcohol dehydrogenase class-3 (381 aa).

Residue Cys-49 participates in Zn(2+) binding. Residue His-50 participates in NAD(+) binding. 2 residues coordinate an alcohol: Thr-51 and His-71. His-71, Glu-72, Cys-101, Cys-104, Cys-107, Cys-115, and Cys-179 together coordinate Zn(2+). Residues Gly-204 to Gly-209, Asp-228, Lys-233, Ile-274, Val-297 to Val-299, Thr-322 to Phe-324, and Arg-374 contribute to the NAD(+) site.

This sequence belongs to the zinc-containing alcohol dehydrogenase family. Class-III subfamily. Homodimer. Requires Zn(2+) as cofactor.

The protein localises to the cytoplasm. It catalyses the reaction a primary alcohol + NAD(+) = an aldehyde + NADH + H(+). The enzyme catalyses a secondary alcohol + NAD(+) = a ketone + NADH + H(+). The catalysed reaction is S-(hydroxymethyl)glutathione + NADP(+) = S-formylglutathione + NADPH + H(+). It carries out the reaction S-(hydroxymethyl)glutathione + NAD(+) = S-formylglutathione + NADH + H(+). The sequence is that of Alcohol dehydrogenase class-3 from Oryza sativa subsp. japonica (Rice).